The following is a 561-amino-acid chain: MVIFKSPLPVGQHQSLEVIAPVGELALNVHLALAKQHEVKPPFIDVMSGKAWHAEEIRDRVDHLARVLAKQFGWQPNVGTPWDKVVAIYSYNTVDFIILSWAVHRLGGLCLLLHSTSSAGEIAAHLKRVQCAAIFTNEPLLATTRKARELLNGEPQKIFILDVANELLPEGHVNSDLTTVEQLAQKGAELEALEPLKWDAVNGRDQVAYLCPTSGTSGAQKLAKVTHGGLLANAVQTVAHELKTNQGKTEVGLNFLPCSHIYGMMLSHTMATRGDCMVLHPFFDLKRVLGSIARFRIERLYLVPSIISALTRNPFLLDMVDLSSVTSVVTGAAPFGSSLADGLHTLRPKWHLQPGWGLTEGGGASSLTPKDDFVPGSSGVLLPLTEVRLIGEDGKDAEGHEVRGEIYMKSPSVIAGYLEDANTQNPFTEDGWLRTGDIGMFKVSPKGVEHLWVVDRVKDMIKVKGMQVAPAELEAHLLLLPQIAEVAVIGVADKISGERPKAFIVQAKNAGPEEQLRETINQHVEATLSEPHWLGKRIEFVNDLPKTSSGKAMKSVLRAKA.

ATP contacts are provided by residues Thr213–Lys221, Pro354–Thr359, Asp437, Arg456, and Lys551. The segment at Asp284–Pro354 is SBD1. The tract at residues Gly355–Tyr417 is SBD2.

Belongs to the ATP-dependent AMP-binding enzyme family.

It functions in the pathway antifungal biosynthesis. Acyl-CoA ligase; part of the gene cluster that mediates the biosynthesis of the antifungal antibiotic FR901469, an inhibitor of beta-1,3-glucansynthase, exerting antifungal activity against the pathogenes Candida albicans and Aspergillus fumigatus. FR901469 is a cyclic depsipeptide containing 12 amino acid residues and a fatty acid chain. The NRPS frbI contains 12 modules responsible for the formation of the depsipeptide backbone which is denoted as Acyl-Thr-Ala-Tyr-Val-4OHPro-Thr-Thr-3OHPro-threo3OHGln-Gly-Thr-Orn-OH (C71H116N14O23). The PKS frbB is probably involved in the production of the hydrocarbon chain, and the acyl-CoA ligase frbC might be involved in the transport of the chain to the peptide ptoduct of frbI. Because FR901469 contains 3 hydroxylated amino acid residues, the 3 oxygenases frbA, frbH, and frbJ might be participating in amino acid hydroxylation. As no thioesterase domains were detected in frbI or frbB, the thioesterases frbD and frbE may instead release and cyclize the products of the NRPS and PKS, respectively. This Dothideomycetidae sp. (strain 11243) (Fungal sp. (strain No.11243)) protein is Acyl-CoA ligase frbB.